A 550-amino-acid chain; its full sequence is Membrane protein insertase YidC (550 aa).

The chain crosses the membrane as a helical span at residues 3–23; that stretch reads IKRTVLWVIFFMSAVMLFDNW. Residues 34–73 are disordered; sequence FPSATQTKTAAPAAPGSSTTASQPTDLPQTTAAAPGSTTP. Positions 35-73 are enriched in low complexity; the sequence is PSATQTKTAAPAAPGSSTTASQPTDLPQTTAAAPGSTTP. The next 4 membrane-spanning stretches (helical) occupy residues 363–383, 429–449, 472–492, and 503–523; these read WGWA…PLSA, FGGC…YWVL, PYFI…KLNP, and MMFM…GLVL.

Belongs to the OXA1/ALB3/YidC family. Type 1 subfamily. Interacts with the Sec translocase complex via SecD. Specifically interacts with transmembrane segments of nascent integral membrane proteins during membrane integration.

It localises to the cell inner membrane. Functionally, required for the insertion and/or proper folding and/or complex formation of integral membrane proteins into the membrane. Involved in integration of membrane proteins that insert both dependently and independently of the Sec translocase complex, as well as at least some lipoproteins. Aids folding of multispanning membrane proteins. The sequence is that of Membrane protein insertase YidC from Paraburkholderia phymatum (strain DSM 17167 / CIP 108236 / LMG 21445 / STM815) (Burkholderia phymatum).